The primary structure comprises 300 residues: CDAN1-interacting nuclease 1 (300 aa).

Its subcellular location is the nucleus. The protein resides in the cytoplasm. May play a role in erythroid cell differentiation. This Danio rerio (Zebrafish) protein is CDAN1-interacting nuclease 1 (cdin1).